A 380-amino-acid polypeptide reads, in one-letter code: Succinyl-diaminopimelate desuccinylase (380 aa).

Histidine 66 serves as a coordination point for Zn(2+). The active site involves aspartate 68. Aspartate 99 serves as a coordination point for Zn(2+). Catalysis depends on glutamate 135, which acts as the Proton acceptor. Zn(2+) is bound by residues glutamate 136, glutamate 164, and histidine 350.

It belongs to the peptidase M20A family. DapE subfamily. Homodimer. It depends on Zn(2+) as a cofactor. Co(2+) serves as cofactor.

It catalyses the reaction N-succinyl-(2S,6S)-2,6-diaminopimelate + H2O = (2S,6S)-2,6-diaminopimelate + succinate. The protein operates within amino-acid biosynthesis; L-lysine biosynthesis via DAP pathway; LL-2,6-diaminopimelate from (S)-tetrahydrodipicolinate (succinylase route): step 3/3. Catalyzes the hydrolysis of N-succinyl-L,L-diaminopimelic acid (SDAP), forming succinate and LL-2,6-diaminopimelate (DAP), an intermediate involved in the bacterial biosynthesis of lysine and meso-diaminopimelic acid, an essential component of bacterial cell walls. This is Succinyl-diaminopimelate desuccinylase from Magnetococcus marinus (strain ATCC BAA-1437 / JCM 17883 / MC-1).